Here is a 791-residue protein sequence, read N- to C-terminus: Valine--tRNA ligase (791 aa).

The 'HIGH' region motif lies at 40–50 (PTVSGKMHMGH). The 'KMSKS' region motif lies at 521-525 (KMSKS). Position 524 (lysine 524) interacts with ATP.

It belongs to the class-I aminoacyl-tRNA synthetase family. ValS type 2 subfamily.

The protein localises to the cytoplasm. It carries out the reaction tRNA(Val) + L-valine + ATP = L-valyl-tRNA(Val) + AMP + diphosphate. Its function is as follows. Catalyzes the attachment of valine to tRNA(Val). As ValRS can inadvertently accommodate and process structurally similar amino acids such as threonine, to avoid such errors, it has a 'posttransfer' editing activity that hydrolyzes mischarged Thr-tRNA(Val) in a tRNA-dependent manner. The polypeptide is Valine--tRNA ligase (Thermoplasma acidophilum (strain ATCC 25905 / DSM 1728 / JCM 9062 / NBRC 15155 / AMRC-C165)).